The chain runs to 447 residues: Ameloblastin (447 aa).

The N-terminal stretch at 1–26 (MSASKIPLFKMKDLILILCLLEMSFA) is a signal peptide. The residue at position 37 (Pro-37) is a Hydroxyproline. At Ser-43 the chain carries Phosphoserine. Ser-112 carries an O-linked (GalNAc...) serine glycan. Disordered stretches follow at residues 165–211 (QQVA…DFAD), 307–338 (DSPV…NLEN), and 353–383 (LLAL…PAAA). A run of 2 repeats spans residues 189–201 (PSLP…DPQG) and 202–214 (PSLP…DPQG).

Belongs to the ameloblastin family. In terms of tissue distribution, ameloblast-specific. Located at the Tomes processes of secretory ameloblasts and in the sheath space between rod-interrod enamel.

It is found in the secreted. It localises to the extracellular space. The protein resides in the extracellular matrix. Functionally, involved in the mineralization and structural organization of enamel. This Homo sapiens (Human) protein is Ameloblastin (AMBN).